The chain runs to 251 residues: Derlin-1 (251 aa).

Ser-2 carries the post-translational modification N-acetylserine. Topologically, residues 2–15 (SDIGDWFRSIPAIT) are cytoplasmic. The chain crosses the membrane as a helical span at residues 16 to 31 (RYWFAATVAVPLIGKL). At 32–69 (GIISPAYFFLWPEAFLYRFQIWRPFTATFYFPVGPGTG) the chain is on the lumenal side. The helical transmembrane segment at 70-89 (FLYLVNLYFLYQYSTRLEAG) threads the bilayer. Topologically, residues 90-94 (AFDGR) are cytoplasmic. Residues 95-115 (PADYLFMLLFNWICIVITGLA) traverse the membrane as a helical segment. The Lumenal segment spans residues 116-122 (MDMQLLM). The chain crosses the membrane as a helical span at residues 123-137 (IPLIMSVLYVWAQLN). At 138–154 (RDLIVSFWFGTRFKACY) the chain is on the cytoplasmic side. Residues 155–166 (LPWVILGFNYII) form a helical membrane-spanning segment. Over 167 to 170 (GGSV) the chain is Lumenal. The chain crosses the membrane as a helical span at residues 171–189 (INELIGNLVGHLYFFLMFR). Residues 190–251 (YPMDLGGRNF…WGQGFRLGDQ (62 aa)) lie on the Cytoplasmic side of the membrane. Residue Ser-201 is modified to Phosphoserine. Phosphothreonine is present on Thr-202. Ser-226 is modified (phosphoserine). The disordered stretch occupies residues 229 to 251 (RAADQNGGGGRHNWGQGFRLGDQ). Residues 241–248 (NWGQGFRL) carry the SHP-box motif.

The protein belongs to the derlin family. As to quaternary structure, homotetramer. The four subunits of the tetramer are arranged in a twofold symmetry. Forms homo- and heterooligomers with DERL2 and DERL3; binding to DERL3 is poorer than that between DERL2 and DERL3. Interacts (via SHP-box motif) with VCP. Interacts with AMFR, SELENOS, SEL1L, SELENOK and SYVN1, as well as with SEL1L-SYVN1 and VCP-SELENOS protein complexes; this interaction is weaker than that observed between DERL2 and these complexes. Interacts with NGLY1 and YOD1. Does not bind to EDEM1. Interacts with DNAJB9. Interacts with RNF103. Interacts with HM13. Interacts with XBP1 isoform 1 (via luminal/ectodomain domain); the interaction obviates the need for ectodomain shedding prior HM13/SPP-mediated XBP1 isoform 1 cleavage. Interacts with the signal recognition particle/SRP and the SRP receptor; in the process of endoplasmic reticulum stress-induced pre-emptive quality control. May interact with UBXN6. Interacts with ZFAND2B; probably through VCP. Interacts with CCDC47. Interacts with C18orf32. May interact with TRAM1. Forms a complex with SVIP and VCP/p97. In terms of tissue distribution, widely expressed, with lowest levels in brain and heart.

It is found in the endoplasmic reticulum membrane. Its function is as follows. Functional component of endoplasmic reticulum-associated degradation (ERAD) for misfolded lumenal proteins. Forms homotetramers which encircle a large channel traversing the endoplasmic reticulum (ER) membrane. This allows the retrotranslocation of misfolded proteins from the ER into the cytosol where they are ubiquitinated and degraded by the proteasome. The channel has a lateral gate within the membrane which provides direct access to membrane proteins with no need to reenter the ER lumen first. May mediate the interaction between VCP and the misfolded protein. Also involved in endoplasmic reticulum stress-induced pre-emptive quality control, a mechanism that selectively attenuates the translocation of newly synthesized proteins into the endoplasmic reticulum and reroutes them to the cytosol for proteasomal degradation. By controlling the steady-state expression of the IGF1R receptor, indirectly regulates the insulin-like growth factor receptor signaling pathway. This is Derlin-1 from Mus musculus (Mouse).